The primary structure comprises 882 residues: Valine--tRNA ligase (882 aa).

Residues P45–H55 carry the 'HIGH' region motif. The 'KMSKS' region signature appears at K525–S529. K528 lines the ATP pocket. Residues E812 to A881 adopt a coiled-coil conformation.

Belongs to the class-I aminoacyl-tRNA synthetase family. ValS type 1 subfamily. Monomer.

It is found in the cytoplasm. It carries out the reaction tRNA(Val) + L-valine + ATP = L-valyl-tRNA(Val) + AMP + diphosphate. Functionally, catalyzes the attachment of valine to tRNA(Val). As ValRS can inadvertently accommodate and process structurally similar amino acids such as threonine, to avoid such errors, it has a 'posttransfer' editing activity that hydrolyzes mischarged Thr-tRNA(Val) in a tRNA-dependent manner. This is Valine--tRNA ligase from Leptospira interrogans serogroup Icterohaemorrhagiae serovar Lai (strain 56601).